The sequence spans 390 residues: Succinate--CoA ligase [ADP-forming] subunit beta (390 aa).

Residues 9 to 244 (KSLFQQYGIP…ISQEDVREAK (236 aa)) enclose the ATP-grasp domain. 4 residues coordinate ATP: K46, E99, L102, and E107. Mg(2+) is bound by residues N199 and D213. Substrate-binding positions include N264 and 321 to 323 (GIV).

The protein belongs to the succinate/malate CoA ligase beta subunit family. In terms of assembly, heterotetramer of two alpha and two beta subunits. Requires Mg(2+) as cofactor.

It carries out the reaction succinate + ATP + CoA = succinyl-CoA + ADP + phosphate. The enzyme catalyses GTP + succinate + CoA = succinyl-CoA + GDP + phosphate. Its pathway is carbohydrate metabolism; tricarboxylic acid cycle; succinate from succinyl-CoA (ligase route): step 1/1. Functionally, succinyl-CoA synthetase functions in the citric acid cycle (TCA), coupling the hydrolysis of succinyl-CoA to the synthesis of either ATP or GTP and thus represents the only step of substrate-level phosphorylation in the TCA. The beta subunit provides nucleotide specificity of the enzyme and binds the substrate succinate, while the binding sites for coenzyme A and phosphate are found in the alpha subunit. The protein is Succinate--CoA ligase [ADP-forming] subunit beta of Hydrogenovibrio crunogenus (strain DSM 25203 / XCL-2) (Thiomicrospira crunogena).